Reading from the N-terminus, the 93-residue chain is Conotoxin F_Vc1 (93 aa).

Positions 1-22 (MQRGAVLLGVVAFLALWPQAGA) are cleaved as a signal peptide. A propeptide spanning residues 23 to 33 (EPYNLNDPDVR) is cleaved from the precursor.

Belongs to the conotoxin F superfamily. Post-translationally, contains 4 disulfide bonds. In terms of tissue distribution, expressed by the venom duct.

It is found in the secreted. The protein is Conotoxin F_Vc1 of Conus victoriae (Queen Victoria cone).